A 392-amino-acid polypeptide reads, in one-letter code: Phosphoglycerate kinase (392 aa).

Substrate-binding positions include 21-23, R36, 59-62, R113, and R146; these read DLN and HLGR. Residues K197, E319, and 345-348 each bind ATP; that span reads GGDT.

The protein belongs to the phosphoglycerate kinase family. As to quaternary structure, monomer.

The protein localises to the cytoplasm. It catalyses the reaction (2R)-3-phosphoglycerate + ATP = (2R)-3-phospho-glyceroyl phosphate + ADP. The protein operates within carbohydrate degradation; glycolysis; pyruvate from D-glyceraldehyde 3-phosphate: step 2/5. The sequence is that of Phosphoglycerate kinase from Thioalkalivibrio sulfidiphilus (strain HL-EbGR7).